Reading from the N-terminus, the 344-residue chain is Coproporphyrin III ferrochelatase (344 aa).

Position 52 (S52) interacts with Fe-coproporphyrin III. C113 provides a ligand contact to [2Fe-2S] cluster. Y116 contributes to the Fe-coproporphyrin III binding site. The Fe(2+) site is built by H172 and E255. Positions 316, 325, and 330 each coordinate [2Fe-2S] cluster.

Belongs to the ferrochelatase family. [2Fe-2S] cluster serves as cofactor.

It localises to the cytoplasm. The catalysed reaction is Fe-coproporphyrin III + 2 H(+) = coproporphyrin III + Fe(2+). It functions in the pathway porphyrin-containing compound metabolism; protoheme biosynthesis. Involved in coproporphyrin-dependent heme b biosynthesis. Catalyzes the insertion of ferrous iron into coproporphyrin III to form Fe-coproporphyrin III. The polypeptide is Coproporphyrin III ferrochelatase (Mycobacterium bovis (strain ATCC BAA-935 / AF2122/97)).